The sequence spans 620 residues: Chaperone protein HscA homolog (620 aa).

Belongs to the heat shock protein 70 family.

In terms of biological role, chaperone involved in the maturation of iron-sulfur cluster-containing proteins. Has a low intrinsic ATPase activity which is markedly stimulated by HscB. This is Chaperone protein HscA homolog from Paracidovorax citrulli (strain AAC00-1) (Acidovorax citrulli).